We begin with the raw amino-acid sequence, 341 residues long: GTPase Obg (341 aa).

One can recognise an Obg domain in the interval 1–159 (MKFVDEALIK…RNLRLELRVL (159 aa)). The tract at residues 128 to 150 (TRYKSSVNRSPRQTTPGSPGESR) is disordered. Residues 129–144 (RYKSSVNRSPRQTTPG) show a composition bias toward polar residues. An OBG-type G domain is found at 160-334 (ADVGLLGLPN…LCYALMQLID (175 aa)). Residues 166 to 173 (GLPNAGKS), 191 to 195 (FTTLH), 213 to 216 (DIPG), 283 to 286 (NKID), and 315 to 317 (SAI) contribute to the GTP site. Mg(2+) is bound by residues Ser-173 and Thr-193.

The protein belongs to the TRAFAC class OBG-HflX-like GTPase superfamily. OBG GTPase family. As to quaternary structure, monomer. Mg(2+) serves as cofactor.

It localises to the cytoplasm. Its function is as follows. An essential GTPase which binds GTP, GDP and possibly (p)ppGpp with moderate affinity, with high nucleotide exchange rates and a fairly low GTP hydrolysis rate. Plays a role in control of the cell cycle, stress response, ribosome biogenesis and in those bacteria that undergo differentiation, in morphogenesis control. This is GTPase Obg from Legionella pneumophila (strain Paris).